Consider the following 233-residue polypeptide: Peroxisomal membrane protein 11-5 (233 aa).

At 1–92 the chain is on the cytoplasmic side; that stretch reads MSSLESARAD…PLILLGKSKN (92 aa). A helical membrane pass occupies residues 93-113; it reads ALLSTFLFLDQIVWAGRTGIY. Residues 114–206 are Lumenal-facing; that stretch reads KNKERAEFLS…LLQLAPKKVT (93 aa). A helical transmembrane segment spans residues 207-226; sequence PRVTGAFGFASSLIACYQLL.

It belongs to the peroxin-11 family. In terms of tissue distribution, expressed in seedlings, roots, shoots, leaf sheaths, flag leaf, panicles, spikelets, and endosperm.

It is found in the peroxisome membrane. In terms of biological role, involved in peroxisomal proliferation. The sequence is that of Peroxisomal membrane protein 11-5 (PEX11-5) from Oryza sativa subsp. japonica (Rice).